A 294-amino-acid polypeptide reads, in one-letter code: Transcription termination/antitermination protein NusG (294 aa).

The tract at residues 1–91 is disordered; it reads MSDPNLNDAV…EEAEPAAPVD (91 aa). A compositionally biased stretch (acidic residues) spans 25–39; sequence DIVEAADSVDPDQAE. The segment covering 40 to 53 has biased composition (low complexity); sequence AADLAAGEPAERAA. The span at 59–85 shows a compositional bias: acidic residues; sequence DDSDEDDAAAEEAVEADDESADEEEAE.

This sequence belongs to the NusG family.

Functionally, participates in transcription elongation, termination and antitermination. The chain is Transcription termination/antitermination protein NusG from Streptomyces griseus.